A 926-amino-acid chain; its full sequence is Lipoxygenase 4, chloroplastic (926 aa).

The N-terminal 58 residues, Met1–Val58, are a transit peptide targeting the chloroplast. Positions Phe106 to Thr228 constitute a PLAT domain. Positions Pro231 to Ile926 constitute a Lipoxygenase domain. Positions 585, 590, 777, 781, and 926 each coordinate Fe cation.

It belongs to the lipoxygenase family. Requires Fe cation as cofactor. Expressed in leaves.

It is found in the plastid. Its subcellular location is the chloroplast. It catalyses the reaction (9Z,12Z)-octadecadienoate + O2 = (13S)-hydroperoxy-(9Z,11E)-octadecadienoate. It carries out the reaction (9Z,12Z,15Z)-octadecatrienoate + O2 = (13S)-hydroperoxy-(9Z,11E,15Z)-octadecatrienoate. It functions in the pathway lipid metabolism; oxylipin biosynthesis. Functionally, plant lipoxygenases may be involved in a number of diverse aspects of plant physiology including growth and development, pest resistance, and senescence or responses to wounding. Catalyzes the hydroperoxidation of lipids containing a cis,cis-1,4-pentadiene structure. 13S-lipoxygenase that can use linolenic acid as substrates. The protein is Lipoxygenase 4, chloroplastic (LOX4) of Arabidopsis thaliana (Mouse-ear cress).